A 1649-amino-acid chain; its full sequence is PHD and RING finger domain-containing protein 1 (1649 aa).

A disordered region spans residues 1 to 79 (MDDDSLDELV…RSGSEDSEDD (79 aa)). S5 carries the post-translational modification Phosphoserine. Over residues 54-79 (TDGEDEGASEEEDLEDRSGSEDSEDD) the composition is skewed to acidic residues. Residues 108–149 (CPICLNAFRDQAVGTPENCAHYFCLDCIVEWSKNANSCPVDR) form an RING-type; degenerate zinc finger. Residues 183-233 (PTFCEVCGRSDREDRLLLCDGCDAGYHMECLDPPLQEVPVDEWFCPECAAP) form a PHD-type zinc finger. The tract at residues 324–398 (VYQRPLTPRT…TRSRIARTLG (75 aa)) is disordered. Phosphothreonine is present on T330. Residues 334-353 (PARRKRKTRRRKKVPGRKKT) show a composition bias toward basic residues. Over residues 354–366 (PSGPSAKSKSSAT) the composition is skewed to low complexity. The segment covering 367–382 (RSKKRQHRVKKRRGKK) has biased composition (basic residues). Phosphoserine occurs at positions 445 and 455. 4 disordered regions span residues 534–600 (KRAA…GAPV), 644–871 (SAAS…PKAQ), 888–1240 (FGTE…KAPL), and 1281–1395 (IQLD…PLLR). Polar residues predominate over residues 568–589 (SPAQGPSGNRPQSTGLSCQGRS). Composition is skewed to basic and acidic residues over residues 685–697 (IRRD…RDAA) and 727–742 (TRAE…REPG). Polar residues predominate over residues 786 to 796 (AHSSQLSSPGF). Residues 802–812 (PVDDKEQRKEN) are compositionally biased toward basic and acidic residues. Residues S814, S845, S846, S864, S867, and S915 each carry the phosphoserine modification. Polar residues-rich tracts occupy residues 835–848 (PTGS…SSPE) and 859–871 (ITRT…PKAQ). A Phosphothreonine modification is found at T917. 3 positions are modified to phosphoserine: S936, S973, and S991. Low complexity predominate over residues 988 to 999 (RPPSRSRSTSSS). Residues 1000 to 1011 (RSRKKAKRKRVS) are compositionally biased toward basic residues. The segment covering 1012–1030 (REHGRTRSGTRSESRDRSS) has biased composition (basic and acidic residues). Residues 1043–1053 (RRQRSKAKSRR) are compositionally biased toward basic residues. Residues 1054–1063 (SSSDRSSSRE) show a composition bias toward basic and acidic residues. Residues 1064 to 1090 (RAKRKKAKDKSREHRRGPWGHSRRTSR) are compositionally biased toward basic residues. The span at 1091–1101 (SRSGSPGSSSY) shows a compositional bias: low complexity. Over residues 1106-1118 (SRKKKKRRSASRP) the composition is skewed to basic residues. S1124 and S1128 each carry phosphoserine. Basic and acidic residues-rich tracts occupy residues 1141-1151 (RSHERPDRKES) and 1181-1198 (REKW…KGAV). S1202 and S1229 each carry phosphoserine. Residues 1284–1297 (DDMSSPPSPESTDS) are compositionally biased toward low complexity. The span at 1345 to 1356 (HLLRPDAAEKAE) shows a compositional bias: basic and acidic residues. Phosphoserine is present on residues S1359, S1360, and S1371. T1404 is subject to Phosphothreonine. Disordered regions lie at residues 1407–1439 (LQES…WDME), 1455–1486 (FPSH…AQPS), 1526–1556 (TPAS…EKTK), and 1630–1649 (MRRH…GAEG). The segment covering 1531–1540 (PASQATAASN) has biased composition (polar residues). Positions 1541 to 1556 (SEEKTPAPRLAAEKTK) are enriched in basic and acidic residues. Positions 1549-1579 (RLAAEKTKKEEYMKKLHMQERAVEEVKLAIK) form a coiled coil.

Interacts with POLR2A (via the C-terminal domain).

The sequence is that of PHD and RING finger domain-containing protein 1 (PHRF1) from Homo sapiens (Human).